Consider the following 338-residue polypeptide: Phenylalanine--tRNA ligase alpha subunit (338 aa).

The disordered stretch occupies residues 71–101; the sequence is QFEEKRSSLSQQTSSSDTYQSLPDLTLPGRQ. The segment covering 78–92 has biased composition (low complexity); that stretch reads SLSQQTSSSDTYQSL. Residue Glu253 participates in Mg(2+) binding.

This sequence belongs to the class-II aminoacyl-tRNA synthetase family. Phe-tRNA synthetase alpha subunit type 1 subfamily. Tetramer of two alpha and two beta subunits. Requires Mg(2+) as cofactor.

It localises to the cytoplasm. It catalyses the reaction tRNA(Phe) + L-phenylalanine + ATP = L-phenylalanyl-tRNA(Phe) + AMP + diphosphate + H(+). The chain is Phenylalanine--tRNA ligase alpha subunit from Desulfotalea psychrophila (strain LSv54 / DSM 12343).